The sequence spans 226 residues: Acyl-homoserine-lactone synthase (226 aa).

Belongs to the autoinducer synthase family.

It catalyses the reaction a fatty acyl-[ACP] + S-adenosyl-L-methionine = an N-acyl-L-homoserine lactone + S-methyl-5'-thioadenosine + holo-[ACP] + H(+). Required for the synthesis of OHHL (N-(3-oxohexanoyl)-L-homoserine lactone), an autoinducer molecule. In Pseudomonas amygdali pv. tabaci (Pseudomonas syringae pv. tabaci), this protein is Acyl-homoserine-lactone synthase (psyI).